The primary structure comprises 244 residues: Claudin-12 (244 aa).

Residues 1–10 (MGCRDVHAAT) are Cytoplasmic-facing. The chain crosses the membrane as a helical span at residues 11–31 (VLSFLCGIASVAGLFAGTLLP). Topologically, residues 32–87 (NWRKLRLITFNRNEKNLTVYTGLWVKCARYDGGNDCLMYDAAWYSSVDQLDLRVLQ) are extracellular. Residues 88-108 (FALPLSILIAMGALLLCLIGM) traverse the membrane as a helical segment. Residues 109 to 135 (CNTAFRSSVPNIKLAKCLVNSAGCHLV) lie on the Cytoplasmic side of the membrane. Residues 136 to 156 (AGLLFFLAGTVSLSPSIWVIF) traverse the membrane as a helical segment. At 157-174 (YNIHLNRKFEPVFAFDYA) the chain is on the extracellular side. A helical membrane pass occupies residues 175-195 (VYVTVASAGGLFMTALLLFIW). Topologically, residues 196 to 244 (YCACKSLPSPFWQPLYSHPPGMHTYSQPYSARSRLSAIEIDIPVVSHTT) are cytoplasmic. Residues S228 and S231 each carry the phosphoserine modification.

It belongs to the claudin family. As to quaternary structure, interacts with OCLN.

Its subcellular location is the cell junction. It is found in the tight junction. The protein localises to the cell membrane. Plays a major role in tight junction-specific obliteration of the intercellular space, through calcium-independent cell-adhesion activity. The polypeptide is Claudin-12 (CLDN12) (Bos taurus (Bovine)).